We begin with the raw amino-acid sequence, 142 residues long: HTH-type transcriptional regulator MntR (142 aa).

Positions methionine 1–threonine 63 constitute an HTH dtxR-type domain. Mn(2+) is bound by residues aspartate 8, glutamate 11, histidine 77, glutamate 99, glutamate 102, and histidine 103.

The protein belongs to the DtxR/MntR family. As to quaternary structure, homodimer.

Its subcellular location is the cytoplasm. Its activity is regulated as follows. DNA binding is strongly activated by Mn(2+). Central regulator of manganese homeostasis. This is HTH-type transcriptional regulator MntR from Bacillus cereus (strain ATCC 14579 / DSM 31 / CCUG 7414 / JCM 2152 / NBRC 15305 / NCIMB 9373 / NCTC 2599 / NRRL B-3711).